A 37-amino-acid chain; its full sequence is Albumin-2 (37 aa).

A Hemopexin repeat occupies 6–37 (IANFSVLNXEAYLFINDKYVLLDYAPGTXNDK).

As to quaternary structure, dimer. In terms of tissue distribution, expressed in seeds (at protein level).

The protein localises to the cytoplasm. It is found in the cytosol. Binds hemin and thiamine. The chain is Albumin-2 from Lens culinaris (Lentil).